We begin with the raw amino-acid sequence, 960 residues long: Phosphoenolpyruvate carboxylase 3 (960 aa).

S8 carries the phosphoserine modification. Residues H167 and K597 contribute to the active site.

This sequence belongs to the PEPCase type 1 family. Homotetramer. Requires Mg(2+) as cofactor.

The protein resides in the cytoplasm. It carries out the reaction oxaloacetate + phosphate = phosphoenolpyruvate + hydrogencarbonate. It functions in the pathway photosynthesis; C4 acid pathway. By light-reversible phosphorylation. Functionally, through the carboxylation of phosphoenolpyruvate (PEP) it forms oxaloacetate, a four-carbon dicarboxylic acid source for the tricarboxylic acid cycle. This chain is Phosphoenolpyruvate carboxylase 3, found in Sorghum bicolor (Sorghum).